Reading from the N-terminus, the 81-residue chain is Large ribosomal subunit protein bL27 (81 aa).

Positions M1–K11 are enriched in polar residues. Residues M1–L21 are disordered.

This sequence belongs to the bacterial ribosomal protein bL27 family.

This is Large ribosomal subunit protein bL27 from Borrelia hermsii (strain HS1 / DAH).